The primary structure comprises 380 residues: Putative 12-oxophytodienoate reductase 4 (380 aa).

FMN contacts are provided by residues 36 to 38, alanine 69, and glutamine 111; that span reads PLT. Position 183 to 186 (183 to 186) interacts with substrate; the sequence is HGAH. Tyrosine 188 functions as the Proton donor in the catalytic mechanism. Residue arginine 235 coordinates FMN. Residue arginine 276 participates in substrate binding. FMN-binding positions include glycine 306 and 327–328; that span reads GR.

The protein belongs to the NADH:flavin oxidoreductase/NADH oxidase family. It depends on FMN as a cofactor.

Putative oxophytodienoate reductase that may be involved in the biosynthesis or metabolism of oxylipin signaling molecules. In Oryza sativa subsp. japonica (Rice), this protein is Putative 12-oxophytodienoate reductase 4 (OPR4).